A 347-amino-acid chain; its full sequence is Transcription elongation factor A protein 3 (347 aa).

Residues 5–82 enclose the TFIIS N-terminal domain; the sequence is EELLRIAKKL…KNWKRLLDSP (78 aa). Residues 83–100 show a composition bias toward basic and acidic residues; that stretch reads RTTKGEREEREKAKKEKG. Positions 83-168 are disordered; sequence RTTKGEREER…TTPSSPSTPT (86 aa). S113 is modified (phosphoserine). The span at 119–131 shows a compositional bias: basic and acidic residues; that stretch reads GGGEPKTRRDSVD. Composition is skewed to low complexity over residues 132–142 and 157–168; these read SRSSTTSSPKR and TPTTPSSPSTPT. Residue S139 is modified to Phosphoserine. Residues 186–302 form the TFIIS central domain; that stretch reads VRDKCVEMLS…EHQMAKTGGT (117 aa). The TFIIS-type zinc-finger motif lies at 305–345; sequence DLLRCSKCKKKNCTYNQVQTRSADEPMTTFVLCNECGNRWK. The Zn(2+) site is built by C309, C312, C337, and C340.

Belongs to the TFS-II family. As to expression, liver, kidney and heart.

The protein localises to the nucleus. Its function is as follows. Necessary for efficient RNA polymerase II transcription elongation past template-encoded arresting sites. The arresting sites in DNA have the property of trapping a certain fraction of elongating RNA polymerases that pass through, resulting in locked ternary complexes. Cleavage of the nascent transcript by S-II allows the resumption of elongation from the new 3'-terminus. The polypeptide is Transcription elongation factor A protein 3 (Tcea3) (Mus musculus (Mouse)).